A 266-amino-acid polypeptide reads, in one-letter code: Putative carbamate hydrolase RutD (266 aa).

An AB hydrolase-1 domain is found at 15–239 (PVVVLSAGLG…RVEMPWGGHA (225 aa)).

Belongs to the AB hydrolase superfamily. Hydrolase RutD family.

It catalyses the reaction carbamate + 2 H(+) = NH4(+) + CO2. Its function is as follows. Involved in pyrimidine catabolism. May facilitate the hydrolysis of carbamate, a reaction that can also occur spontaneously. The sequence is that of Putative carbamate hydrolase RutD from Klebsiella variicola (strain At-22).